The sequence spans 454 residues: GTPase Der (454 aa).

EngA-type G domains are found at residues 4 to 167 (AIVA…SEDK) and 188 to 363 (LQLA…ASWQ). GTP contacts are provided by residues 10–17 (GKPNVGKS), 56–60 (DTPGL), 121–124 (NKTE), 194–201 (GRPNCGKS), 241–245 (DTAGV), and 306–309 (NKCD). The region spanning 364–450 (KRVTTGTLNQ…PVRLSFVKGK (87 aa)) is the KH-like domain.

Belongs to the TRAFAC class TrmE-Era-EngA-EngB-Septin-like GTPase superfamily. EngA (Der) GTPase family. Associates with the 50S ribosomal subunit.

GTPase that plays an essential role in the late steps of ribosome biogenesis. The polypeptide is GTPase Der (Orientia tsutsugamushi (strain Boryong) (Rickettsia tsutsugamushi)).